Here is a 693-residue protein sequence, read N- to C-terminus: Protein-glutamine gamma-glutamyltransferase E (693 aa).

Residue Ala-2 is modified to N-acetylalanine. Phosphotyrosine is present on Tyr-111. Residue Thr-112 is modified to Phosphothreonine. 5 residues coordinate Ca(2+): Ala-222, Asn-225, Asn-227, Asp-228, and Asn-230. Cys-273 is an active-site residue. Ca(2+) is bound by residues Asp-302, Asp-304, Asn-306, Ser-308, and Asp-325. Active-site residues include His-331 and Asp-354. Asn-394, Ser-416, Glu-444, and Glu-449 together coordinate Ca(2+).

The protein belongs to the transglutaminase superfamily. Transglutaminase family. As to quaternary structure, consists of two polypeptide chains, which are synthesized as a precursor form of a single polypeptide. Requires Ca(2+) as cofactor. In terms of processing, activated by proteolytic processing. In vitro activation is commonly achieved by cleavage with dispase, a neutral bacterial protease. Dispase cleavage site was proposed to lie between Ser-470 and Ser-471 or between Pro-465 and Phe-466. Physiological activation may be catalyzed by CTSL and, to a lesser extent, by CTSS, but not by CTSB, CTSD nor CTSV.

The protein resides in the cytoplasm. It carries out the reaction L-glutaminyl-[protein] + L-lysyl-[protein] = [protein]-L-lysyl-N(6)-5-L-glutamyl-[protein] + NH4(+). In terms of biological role, catalyzes the calcium-dependent formation of isopeptide cross-links between glutamine and lysine residues in various proteins, as well as the conjugation of polyamines to proteins. Involved in the formation of the cornified envelope (CE), a specialized component consisting of covalent cross-links of proteins beneath the plasma membrane of terminally differentiated keratinocytes. Catalyzes small proline-rich proteins (SPRR1 and SPRR2) and LOR cross-linking to form small interchain oligomers, which are further cross-linked by TGM1 onto the growing CE scaffold. In hair follicles, involved in cross-linking structural proteins to hardening the inner root sheath. The polypeptide is Protein-glutamine gamma-glutamyltransferase E (TGM3) (Homo sapiens (Human)).